Reading from the N-terminus, the 359-residue chain is Phospho-N-acetylmuramoyl-pentapeptide-transferase (359 aa).

10 helical membrane-spanning segments follow: residues 3 to 23, 55 to 75, 84 to 104, 117 to 137, 156 to 176, 187 to 207, 231 to 251, 255 to 275, 280 to 300, and 334 to 354; these read QIII…PVLI, VAIL…GIAF, GLLV…DDFI, TSKT…VLQF, IATV…LVMS, LDGL…IVTF, LAVI…WNAA, IFMG…LSVT, LLAV…VLQI, and FWLL…GEWL.

The protein belongs to the glycosyltransferase 4 family. MraY subfamily. Requires Mg(2+) as cofactor.

The protein localises to the cell membrane. The catalysed reaction is UDP-N-acetyl-alpha-D-muramoyl-L-alanyl-gamma-D-glutamyl-meso-2,6-diaminopimeloyl-D-alanyl-D-alanine + di-trans,octa-cis-undecaprenyl phosphate = di-trans,octa-cis-undecaprenyl diphospho-N-acetyl-alpha-D-muramoyl-L-alanyl-D-glutamyl-meso-2,6-diaminopimeloyl-D-alanyl-D-alanine + UMP. It functions in the pathway cell wall biogenesis; peptidoglycan biosynthesis. Its function is as follows. Catalyzes the initial step of the lipid cycle reactions in the biosynthesis of the cell wall peptidoglycan: transfers peptidoglycan precursor phospho-MurNAc-pentapeptide from UDP-MurNAc-pentapeptide onto the lipid carrier undecaprenyl phosphate, yielding undecaprenyl-pyrophosphoryl-MurNAc-pentapeptide, known as lipid I. This chain is Phospho-N-acetylmuramoyl-pentapeptide-transferase, found in Mycobacteroides abscessus (strain ATCC 19977 / DSM 44196 / CCUG 20993 / CIP 104536 / JCM 13569 / NCTC 13031 / TMC 1543 / L948) (Mycobacterium abscessus).